The chain runs to 288 residues: Bifunctional protein FolD (288 aa).

NADP(+)-binding positions include 166–168, serine 191, and isoleucine 232; that span reads GRS.

It belongs to the tetrahydrofolate dehydrogenase/cyclohydrolase family. As to quaternary structure, homodimer.

The catalysed reaction is (6R)-5,10-methylene-5,6,7,8-tetrahydrofolate + NADP(+) = (6R)-5,10-methenyltetrahydrofolate + NADPH. It catalyses the reaction (6R)-5,10-methenyltetrahydrofolate + H2O = (6R)-10-formyltetrahydrofolate + H(+). The protein operates within one-carbon metabolism; tetrahydrofolate interconversion. Catalyzes the oxidation of 5,10-methylenetetrahydrofolate to 5,10-methenyltetrahydrofolate and then the hydrolysis of 5,10-methenyltetrahydrofolate to 10-formyltetrahydrofolate. The chain is Bifunctional protein FolD from Rickettsia massiliae (strain Mtu5).